The following is a 173-amino-acid chain: Archaemetzincin (173 aa).

H130 lines the Zn(2+) pocket. E131 functions as the Proton acceptor in the catalytic mechanism. Zn(2+) is bound by residues H134, H140, C141, C146, C165, and C168.

This sequence belongs to the peptidase M54 family. As to quaternary structure, monomer. Zn(2+) is required as a cofactor.

Its function is as follows. Probable zinc metalloprotease whose natural substrate is unknown. The sequence is that of Archaemetzincin from Halobacterium salinarum (strain ATCC 29341 / DSM 671 / R1).